We begin with the raw amino-acid sequence, 358 residues long: DNA replication and repair protein RecF (358 aa).

An ATP-binding site is contributed by 30 to 37 (GNNGSGKT).

It belongs to the RecF family.

It localises to the cytoplasm. Functionally, the RecF protein is involved in DNA metabolism; it is required for DNA replication and normal SOS inducibility. RecF binds preferentially to single-stranded, linear DNA. It also seems to bind ATP. The chain is DNA replication and repair protein RecF from Actinobacillus succinogenes (strain ATCC 55618 / DSM 22257 / CCUG 43843 / 130Z).